We begin with the raw amino-acid sequence, 144 residues long: Large ribosomal subunit protein uL16c (144 aa).

This sequence belongs to the universal ribosomal protein uL16 family. Part of the 50S ribosomal subunit.

It is found in the plastid. Its subcellular location is the chloroplast. The polypeptide is Large ribosomal subunit protein uL16c (Chara vulgaris (Common stonewort)).